A 1166-amino-acid polypeptide reads, in one-letter code: Pesticidal crystal protein Cry1Ga (1166 aa).

It belongs to the delta endotoxin family.

Its function is as follows. Promotes colloidosmotic lysis by binding to the midgut epithelial cells of insects. In Bacillus thuringiensis, this protein is Pesticidal crystal protein Cry1Ga (cry1Ga).